Here is a 391-residue protein sequence, read N- to C-terminus: ATP phosphoribosyltransferase regulatory subunit (391 aa).

Belongs to the class-II aminoacyl-tRNA synthetase family. HisZ subfamily. In terms of assembly, heteromultimer composed of HisG and HisZ subunits.

The protein resides in the cytoplasm. It functions in the pathway amino-acid biosynthesis; L-histidine biosynthesis; L-histidine from 5-phospho-alpha-D-ribose 1-diphosphate: step 1/9. In terms of biological role, required for the first step of histidine biosynthesis. May allow the feedback regulation of ATP phosphoribosyltransferase activity by histidine. In Prochlorococcus marinus (strain NATL1A), this protein is ATP phosphoribosyltransferase regulatory subunit.